The chain runs to 188 residues: FMN-dependent NADPH-azoreductase (188 aa).

The protein belongs to the azoreductase type 2 family. In terms of assembly, homotetramer. Requires FMN as cofactor.

Functionally, catalyzes the reductive cleavage of azo bond in aromatic azo compounds to the corresponding amines. Requires NADPH, but not NADH, as an electron donor for its activity. The chain is FMN-dependent NADPH-azoreductase (azo1) from Staphylococcus saprophyticus subsp. saprophyticus (strain ATCC 15305 / DSM 20229 / NCIMB 8711 / NCTC 7292 / S-41).